The chain runs to 448 residues: Vacuolar amino acid transporter 6 (448 aa).

At 1 to 7 the chain is on the cytoplasmic side; sequence MVASIRS. The chain crosses the membrane as a helical span at residues 8–28; that stretch reads GVLTLLHTACGAGILAMPYAF. Residues 29–32 lie on the Vacuolar side of the membrane; that stretch reads KPFG. A helical transmembrane segment spans residues 33 to 53; it reads LIPGVIMIVLCGACAMQSLFI. At 54–80 the chain is on the cytoplasmic side; that stretch reads QARVAKYVPQGRASFSALTRLINPNLG. Residues 81 to 101 traverse the membrane as a helical segment; the sequence is IVFDLAIAIKCFGVGVSYMIV. Topologically, residues 102-125 are vacuolar; that stretch reads VGDLMPQIMSVWTRNAWLLNRNVQ. A helical transmembrane segment spans residues 126 to 146; that stretch reads ISLIMLFFVAPLSFLKKLNSL. At 147-150 the chain is on the cytoplasmic side; it reads RYAS. The chain crosses the membrane as a helical span at residues 151 to 171; that stretch reads MVAISSVAYLCVLVLLHYVAP. Over 172–195 the chain is Vacuolar; it reads SDEILRLKGRISYLLPPQSHDLNV. Residues 196–216 form a helical membrane-spanning segment; sequence LNTLPIFVFAYTCHHNMFSII. Residues 217-229 lie on the Cytoplasmic side of the membrane; the sequence is NEQRSSRFEHVMK. Residues 230–250 traverse the membrane as a helical segment; sequence IPLIAISLALILYIAIGCAGY. Residues 251–267 lie on the Vacuolar side of the membrane; it reads LTFGDNIIGNIIMLYPQ. The helical transmembrane segment at 268–288 threads the bilayer; sequence AVSSTIGRIAIVLLVMLAFPL. Topologically, residues 289–357 are cytoplasmic; it reads QCHPARASIH…PKETPLRGKS (69 aa). At Ser344 the chain carries Phosphoserine. The helical transmembrane segment at 358 to 378 threads the bilayer; the sequence is FIVITCSILVASYLVAISVSS. The Vacuolar portion of the chain corresponds to 379-381; the sequence is LAR. Residues 382–402 traverse the membrane as a helical segment; it reads VLAIVGATGSTSISFILPGLF. The Cytoplasmic segment spans residues 403-424; it reads GYKLIGTEHKTAVPLTTKIFKY. Residues 425-445 form a helical membrane-spanning segment; it reads TGLLLFIWGLIIMITCLTAAL. Over 446 to 448 the chain is Vacuolar; that stretch reads KLN.

It belongs to the amino acid/polyamine transporter 2 family.

It is found in the vacuole membrane. In terms of biological role, involved in amino acid efflux from the vacuole to the cytoplasm. Capable of transporting aspartate and glutamate. Requires ATP for function. The chain is Vacuolar amino acid transporter 6 (AVT6) from Saccharomyces cerevisiae (strain ATCC 204508 / S288c) (Baker's yeast).